The primary structure comprises 390 residues: 5-hydroxytryptamine receptor 1B (390 aa).

The Extracellular segment spans residues 1–46; that stretch reads MEEPGAQCAPPLAAGSQIAVPQANLSAAHSHNCSAEGYIYQDSIAL. 2 N-linked (GlcNAc...) asparagine glycosylation sites follow: Asn-24 and Asn-32. The chain crosses the membrane as a helical span at residues 47-72; it reads PWKVLLVLLLALFTLATTLSNAFVVA. Residues 73 to 86 lie on the Cytoplasmic side of the membrane; it reads TVYRTRKLHTPANY. A helical membrane pass occupies residues 87–111; that stretch reads LIASLAVTDLLVSILVMPISTMYTV. Topologically, residues 112 to 119 are extracellular; the sequence is TGRWTLGQ. Residues 120–145 traverse the membrane as a helical segment; that stretch reads VVCDLWLSSDITCCTASIMHLCVIAL. Residues Cys-122 and Cys-199 are joined by a disulfide bond. The ergotamine site is built by Asp-129 and Thr-134. A DRY motif; important for ligand-induced conformation changes and signaling motif is present at residues 146 to 148; that stretch reads DRY. The Cytoplasmic segment spans residues 146 to 165; sequence DRYWAITDAVEYSAKRTPKR. A helical membrane pass occupies residues 166–184; that stretch reads AAIMIRLVWVFSICISLPP. The Extracellular segment spans residues 185-205; sequence FFWRQAKAEEEVSECLVNTDH. Val-201 is an ergotamine binding site. Residues 206-229 traverse the membrane as a helical segment; sequence VLYTVYSTVGAFYLPTLLLIALYG. Residues 230 to 315 lie on the Cytoplasmic side of the membrane; that stretch reads RIYVEARSRI…AARERKATKT (86 aa). The span at 260 to 272 shows a compositional bias: polar residues; that stretch reads SPGSTTSVTSINS. A disordered region spans residues 260–282; the sequence is SPGSTTSVTSINSRAPDVPSESG. A helical transmembrane segment spans residues 316 to 337; sequence LGIILGVFIVCWLPFFIISLVM. Residues 338–347 lie on the Extracellular side of the membrane; it reads PICKDACWFH. A helical transmembrane segment spans residues 348–370; the sequence is QAIFDFFTWLGYVNSLINPIIYT. An NPxxY motif; important for ligand-induced conformation changes and signaling motif is present at residues 365-369; sequence NPIIY. At 371-390 the chain is on the cytoplasmic side; the sequence is MSNEDFKQAFHKLIRFKCTS. Residue Cys-388 is the site of S-palmitoyl cysteine attachment.

It belongs to the G-protein coupled receptor 1 family. As to quaternary structure, homodimer. Heterodimer with HTR1D. Phosphorylated. Desensitization of the receptor may be mediated by its phosphorylation. Post-translationally, palmitoylated.

Its subcellular location is the cell membrane. In terms of biological role, G-protein coupled receptor for 5-hydroxytryptamine (serotonin). Also functions as a receptor for ergot alkaloid derivatives, various anxiolytic and antidepressant drugs and other psychoactive substances, such as lysergic acid diethylamide (LSD). Ligand binding causes a conformation change that triggers signaling via guanine nucleotide-binding proteins (G proteins) and modulates the activity of downstream effectors, such as adenylate cyclase. HTR1B is coupled to G(i)/G(o) G alpha proteins and mediates inhibitory neurotransmission by inhibiting adenylate cyclase activity. Arrestin family members inhibit signaling via G proteins and mediate activation of alternative signaling pathways. Regulates the release of 5-hydroxytryptamine, dopamine and acetylcholine in the brain, and thereby affects neural activity, nociceptive processing, pain perception, mood and behavior. Besides, plays a role in vasoconstriction of cerebral arteries. The sequence is that of 5-hydroxytryptamine receptor 1B (HTR1B) from Oryctolagus cuniculus (Rabbit).